Here is a 95-residue protein sequence, read N- to C-terminus: RING finger protein Z (95 aa).

G2 carries N-myristoyl glycine; by host lipidation. Residues 38 to 74 form an RING-type; atypical zinc finger; that stretch reads CKSCWFANKGLLKCSNHYLCLKCLTLMLRRSDYCGIC. The PTAP/PSAP motif motif lies at 88–91; it reads PSAP.

It belongs to the arenaviridae Z protein family. Interacts with protein NP; this interaction probably directs the encapsidated genome to budding sites. Interacts (via RING domain) with polymerase L; this interaction inhibits viral transcription and replication, Z partially blocks the product exit tunnel for the releasing nascent RNA product. Interacts with the glycoprotein complex; this interaction plays a role in virion budding. Interacts with host eIF4E; this interaction results in eIF4E reduced affinity for its substrate, the 5'-m7 G cap structure. Interacts (via late-budding domain) with host TSG101; this interaction is essential for budding and release of viral particles. Interacts with host RPLP0; this interaction may serve to load ribosome-like particles inside the virion. Interacts with host PML; this interaction induces PML bodies redistribution in the cytoplasm upon viral infection. Post-translationally, myristoylation is required for the role of RING finger protein Z in assembly and budding.

It localises to the virion. The protein resides in the host cytoplasm. The protein localises to the host perinuclear region. Its subcellular location is the host cell membrane. Functionally, plays a crucial role in virion assembly and budding. Expressed late in the virus life cycle, it acts as an inhibitor of viral transcription and RNA synthesis by interacting with the viral polymerase L. Presumably recruits the NP encapsidated genome to cellular membranes at budding sites via direct interaction with NP. Plays critical roles in the final steps of viral release by interacting with host TSG101, a member of the vacuolar protein-sorting pathway and using other cellular host proteins involved in vesicle formation pathway. The budding of the virus progeny occurs after association of protein Z with the viral glycoprotein complex SSP-GP1-GP2 at the cell periphery, step that requires myristoylation of protein Z. Also selectively represses protein production by associating with host eIF4E. In cell-based minigenome assay, has an inhibitory effect on the ribonucleoprotein machinery (vRNP), which is responsible for the replication and transcription of the viral genome. The sequence is that of RING finger protein Z from Neotoma (wood rats).